Consider the following 483-residue polypeptide: Probable gamma-aminobutyrate transaminase 4 (483 aa).

A pyridoxal 5'-phosphate-binding site is contributed by Gly-138–Ser-139. Tyr-171 serves as a coordination point for substrate. Residue Asp-278 participates in pyridoxal 5'-phosphate binding. Lys-307 provides a ligand contact to substrate. Position 307 is an N6-(pyridoxal phosphate)lysine (Lys-307).

This sequence belongs to the class-III pyridoxal-phosphate-dependent aminotransferase family. Not detected in roots, stems, flowers or leaves of healthy plants.

It localises to the cytoplasm. The enzyme catalyses 4-aminobutanoate + pyruvate = succinate semialdehyde + L-alanine. The catalysed reaction is 4-aminobutanoate + glyoxylate = succinate semialdehyde + glycine. Transaminase that degrades gamma-amino butyric acid (GABA). The sequence is that of Probable gamma-aminobutyrate transaminase 4 (GABA-T) from Oryza sativa subsp. japonica (Rice).